A 107-amino-acid polypeptide reads, in one-letter code: uncharacterized protein (107 aa).

Positions 80–98 (SIDNLKPTSHQNGTTNDTA) are enriched in polar residues. The interval 80-107 (SIDNLKPTSHQNGTTNDTATMDHLEKNE) is disordered.

This is an uncharacterized protein from Human spumaretrovirus (SFVcpz(hu)).